The chain runs to 461 residues: MANKSMETIVSLAKHRGFVFPGSEIYGGLANTWDYGPLGVELKNNIKKAWWQKFVQESEHNVGIDAAILMNPKAWVASGHVGNFNDPMIDCKSCKARHRADKIIEDAALAKGDEIIVDGMTFDQMKETMIKYDVVCPDCGKADFTDIRQFNLMFKTFQGVTESSTNEIFLRPETAQGIFVNFKNVQRSMRKRTPFGIAQIGKSFRNEITPGNFTFRTREFEQMELEFFCKPGEDLEWHSYWKEFCKNWLLNLGMKEDSMRLRDHEDDELSHYSNATTDIEFKFPFGWGELWGIADRTDYDLKQHMEHSGEDFTYIDPVSNDRYIPYCIEPSLGADRVTLAFLCDAYDEEELEGDDKRTVLRFHPAIAPFKAAVLPLSKKLSDEATDVWAELRKAFPVDFDESQSIGKRYRRQDEIGTPFCITYDFDSKEDGQVTVRHRDSMTQERMPISEVKAYIEKHLQF.

The substrate site is built by Arg99 and Glu173. Residues 205–207 (RNE), 215–220 (FRTREF), 289–290 (EL), and 333–336 (GADR) each bind ATP. 220–224 (FEQME) provides a ligand contact to substrate. 329–333 (EPSLG) is a substrate binding site.

The protein belongs to the class-II aminoacyl-tRNA synthetase family. In terms of assembly, homodimer.

It is found in the cytoplasm. It catalyses the reaction tRNA(Gly) + glycine + ATP = glycyl-tRNA(Gly) + AMP + diphosphate. Catalyzes the attachment of glycine to tRNA(Gly). The sequence is that of Glycine--tRNA ligase from Lysinibacillus sphaericus (strain C3-41).